Reading from the N-terminus, the 459-residue chain is Periodic tryptophan protein 1 homolog (459 aa).

Residues G44–R84 form a disordered region. Positions Q48 to V73 are enriched in acidic residues. Positions D74–R84 are enriched in basic and acidic residues. WD repeat units follow at residues L168–P214, G232–T272, A275–S315, K321–W361, and A365–V405. S385 is subject to Phosphoserine.

The protein belongs to the WD repeat PWP1 family. As to quaternary structure, interacts with Mybbp1A. Post-translationally, phosphorylated in response to nutrient-activated TORC1 signaling. In terms of tissue distribution, detected in the germline of adult testis and ovary (at protein level). Detected in ovary somatic cells, in zfh1-positive cyst cells in the testis and absent in differentiated cyst cells (at protein level).

Its subcellular location is the nucleus. It is found in the nucleolus. The protein localises to the chromosome. It localises to the nucleoplasm. Its function is as follows. Chromatin-associated factor that regulates transcription. Regulates Pol I-mediated rRNA biogenesis and, probably, Pol III-mediated transcription. Regulates the localization to the nucleolus of Cdk7, a regulator of the Pol I-elongation factor TFIIH. Acts as a regulator of cell proliferation and tissue growth as part of the TORC1 and Myc signaling pathway in response to nutrients. Required in males for both germline stem cell (GSC) maintenance and early stages of germ cell differentiation of germ cell cysts. Not required for female germline stem cell (GSC) maintenance, but necessary to regulate germ cell differentiation and egg chamber development. In female somatic cells, required for follicle stem cell survival and maintenance. The polypeptide is Periodic tryptophan protein 1 homolog (Drosophila melanogaster (Fruit fly)).